The primary structure comprises 173 residues: NADH-ubiquinone oxidoreductase chain 6 (173 aa).

Transmembrane regions (helical) follow at residues 1-21 (MTYFVLFLGLCFVLGGLAVAS), 27-47 (YGVVGLVLASVAGCGWLLSLG), 48-68 (ASFVSLVLFMVYLGGMLVVFV), 87-107 (VIGYGMGFIVVLVVGVVISGF), and 139-159 (WGVGMFLAAGWGLLLTLFVVL).

Belongs to the complex I subunit 6 family.

It is found in the mitochondrion membrane. The enzyme catalyses a ubiquinone + NADH + 5 H(+)(in) = a ubiquinol + NAD(+) + 4 H(+)(out). Its function is as follows. Core subunit of the mitochondrial membrane respiratory chain NADH dehydrogenase (Complex I) that is believed to belong to the minimal assembly required for catalysis. Complex I functions in the transfer of electrons from NADH to the respiratory chain. The immediate electron acceptor for the enzyme is believed to be ubiquinone. In Brachyramphus marmoratus (Marbled murrelet), this protein is NADH-ubiquinone oxidoreductase chain 6 (MT-ND6).